Here is a 424-residue protein sequence, read N- to C-terminus: C4-dicarboxylate transport protein (424 aa).

Helical transmembrane passes span 4–24 (SLFK…VLLG), 44–64 (LIKM…IAGM), 76–96 (VALI…LVVV), 142–162 (IGAF…LFGF), 184–206 (VFFG…AMAF), 222–242 (LIVC…GLIA), 326–346 (IWHQ…AAGV), and 352–372 (IVLA…LALI).

The protein belongs to the dicarboxylate/amino acid:cation symporter (DAACS) (TC 2.A.23) family.

Its subcellular location is the cell inner membrane. Its function is as follows. Responsible for the transport of dicarboxylates such as succinate, fumarate, and malate from the periplasm across the membrane. This chain is C4-dicarboxylate transport protein, found in Erwinia tasmaniensis (strain DSM 17950 / CFBP 7177 / CIP 109463 / NCPPB 4357 / Et1/99).